A 129-amino-acid chain; its full sequence is D-ribose pyranase (129 aa).

His-20 (proton donor) is an active-site residue. Substrate is bound by residues Asp-28, His-96, and 118–120 (YAN).

It belongs to the RbsD / FucU family. RbsD subfamily. As to quaternary structure, homodecamer.

It localises to the cytoplasm. The enzyme catalyses beta-D-ribopyranose = beta-D-ribofuranose. It functions in the pathway carbohydrate metabolism; D-ribose degradation; D-ribose 5-phosphate from beta-D-ribopyranose: step 1/2. Its function is as follows. Catalyzes the interconversion of beta-pyran and beta-furan forms of D-ribose. This Staphylococcus saprophyticus subsp. saprophyticus (strain ATCC 15305 / DSM 20229 / NCIMB 8711 / NCTC 7292 / S-41) protein is D-ribose pyranase.